Here is a 355-residue protein sequence, read N- to C-terminus: D-alanine--D-alanine ligase (355 aa).

The 208-residue stretch at 143–350 (KTIFSNHKLP…IEQLVAKLVD (208 aa)) folds into the ATP-grasp domain. Residue 178-233 (LKKLKFPVFVKPSNSGSSLGISKVKNESEILLALEKAWGIDPRILIEEGLEVREIE) coordinates ATP. Mg(2+) contacts are provided by D303, E317, and N319.

It belongs to the D-alanine--D-alanine ligase family. Mg(2+) is required as a cofactor. Requires Mn(2+) as cofactor.

Its subcellular location is the cytoplasm. The enzyme catalyses 2 D-alanine + ATP = D-alanyl-D-alanine + ADP + phosphate + H(+). The protein operates within cell wall biogenesis; peptidoglycan biosynthesis. Cell wall formation. The sequence is that of D-alanine--D-alanine ligase from Prochlorococcus marinus (strain MIT 9301).